The following is a 123-amino-acid chain: Integration host factor subunit alpha (123 aa).

The interval 97-123 (NANGTASSMSSSANAAAGDKSESASGT) is disordered. Over residues 102-113 (ASSMSSSANAAA) the composition is skewed to low complexity.

Belongs to the bacterial histone-like protein family. In terms of assembly, heterodimer of an alpha and a beta chain.

Functionally, this protein is one of the two subunits of integration host factor, a specific DNA-binding protein that functions in genetic recombination as well as in transcriptional and translational control. This Rhodopseudomonas palustris (strain HaA2) protein is Integration host factor subunit alpha.